Reading from the N-terminus, the 102-residue chain is MKKVLALVVAAAMGLSSAAFAAETATTPAPTATTTKAAPAKTTHHKKQHKAAPAQKAQAAKKHHKNAKAEQKAPEQKAQAAKKHAKKHSHQQPAKPAAQPAA.

A signal peptide spans 1 to 21 (MKKVLALVVAAAMGLSSAAFA). A compositionally biased stretch (low complexity) spans 22-41 (AETATTPAPTATTTKAAPAK). The propeptide occupies 22–58 (AETATTPAPTATTTKAAPAKTTHHKKQHKAAPAQKAQ). The tract at residues 22-102 (AETATTPAPT…PAKPAAQPAA (81 aa)) is disordered. Residues 80 to 90 (AAKKHAKKHSH) show a composition bias toward basic residues. Residues 91–102 (QQPAKPAAQPAA) are compositionally biased toward low complexity.

It belongs to the Asr family. Post-translationally, proteolytic processing gives rise to the active protein.

It localises to the periplasm. Functionally, required for growth and/or survival at acidic conditions. The protein is Acid shock protein of Escherichia coli O45:K1 (strain S88 / ExPEC).